The primary structure comprises 266 residues: Very-long-chain aldehyde decarbonylase GL1-11 (266 aa).

Transmembrane regions (helical) follow at residues 25–45 (VVTFLLHETVFFLSGLPSLLF), 74–94 (ILYHVCVNLPVMVLSYPAFKF), 106–126 (WTVIVSQVLFYFVLEDFIFYW), and 163–183 (ILFLGFATIVGPALTGPHLFT). One can recognise a Fatty acid hydroxylase domain in the interval 113–248 (VLFYFVLEDF…FVYMDWLFGT (136 aa)).

This sequence belongs to the sterol desaturase family. In terms of assembly, homodimer.

The protein localises to the endoplasmic reticulum membrane. It catalyses the reaction a long-chain fatty aldehyde + 2 NADPH + O2 + H(+) = a long-chain alkane + formate + 2 NADP(+) + H2O. In terms of biological role, aldehyde decarbonylase involved in the conversion of aldehydes to alkanes. Core component of a very-long-chain alkane synthesis complex. The sequence is that of Very-long-chain aldehyde decarbonylase GL1-11 from Oryza sativa subsp. indica (Rice).